Consider the following 395-residue polypeptide: Cyclomarin C epoxidase CymV (395 aa).

Belongs to the cytochrome P450 family.

Cytochrome P450; part of the gene cluster that mediates the biosynthesis of cyclic heptapeptides, known as cyclomarins and also of cyclic dipeptides, called cyclomarazines, which have both antimicrobial and cytotoxic effects. First, CymD catalyzes the reverse N-prenylation of monomeric L-tryptophan with dimethylallyl diphosphate (DMAPP) to form N-(1,1-dimethylallyl)-tryptophan (r-N-DMAT). The N-(1,1-dimethylallyl)-tryptophan produced by CymD is then combined with a range of standard and nonproteinogenic amino acid substrates to synthesize the peptides, a process that is probably catalyzed by the non-canonical nonribosomal peptide synthetase (NRPS), CymA. Other proteins in the cluster catalyze further modifications of the peptides including CymV which catalyzes the oxidation of olefinic cyclomarins and cyclomarazines to their respective epoxide derivatives. In Salinispora arenicola (strain CNS-205), this protein is Cyclomarin C epoxidase CymV.